The chain runs to 558 residues: Membrane transporter D2 (558 aa).

The segment at 1–28 (MTLKKRSSAPELPTSLDEDEEEDSPQPL) is disordered. The Cytoplasmic segment spans residues 1-38 (MTLKKRSSAPELPTSLDEDEEEDSPQPLSNTPFFSMKN). A helical transmembrane segment spans residues 39–59 (LIVATPIILTPLLYGYNLGFV). The Extracellular portion of the chain corresponds to 60–152 (GPYSTMYGYA…QVGYSSIQSG (93 aa)). A helical transmembrane segment spans residues 153-173 (VFAGSLVIGSTMGALMGGYLT). Topologically, residues 174 to 179 (KRLDYC) are cytoplasmic. A helical membrane pass occupies residues 180–200 (KSFLFIGLLSVIGNVLTHVAT). At 201 to 204 (GLFH) the chain is on the extracellular side. A helical membrane pass occupies residues 205-225 (YWVLFVARIVLGFPLGWQSIT). Over 226-241 (SSHYTDKFAPANHAKT) the chain is Cytoplasmic. The helical transmembrane segment at 242–262 (LGTLFQVSVSTGIFVTSFFGL) threads the bilayer. Over 263 to 281 (VLGNTIQYDAASNANTMGR) the chain is Extracellular. The chain crosses the membrane as a helical span at residues 282–302 (MQGLVSVSTLLSIFVVFLPLI). The Cytoplasmic portion of the chain corresponds to 303–335 (TKDGYSKSRRGDYEGENSEDASRKAAEEYTMTQ). A helical transmembrane segment spans residues 336–356 (MIGPILNGVAMGCVTQLTGIN). The Extracellular portion of the chain corresponds to 357–373 (ANMNFAPTIMSNLGLQP). Residues 374 to 394 (LVGNIIVMAWNMLATFCVIPL) form a helical membrane-spanning segment. At 395–402 (SRRFSMRT) the chain is on the cytoplasmic side. Residues 403-423 (LFLFCGFVGSLCCVFLGGIPV) traverse the membrane as a helical segment. At 424–441 (YPGVTKSDKAISGIAITG) the chain is on the extracellular side. A helical membrane pass occupies residues 442 to 463 (IAIFIALYEMGVGPCFYVLAVD). Residues 464–478 (VFPESFRPIGSSITV) lie on the Cytoplasmic side of the membrane. The chain crosses the membrane as a helical span at residues 479–499 (GVMFIFNLIINICYPIATEGI). At 500 to 512 (SGGPSGNPNKGQA) the chain is on the extracellular side. Residues 513–533 (VAFIFFGCIGVVACVIEYFFL) traverse the membrane as a helical segment. Topologically, residues 534 to 558 (QPWVEPEAKMTDDLDGAAVPEGKHD) are cytoplasmic.

It belongs to the major facilitator superfamily. Sugar transporter (TC 2.A.1.1) family.

The protein localises to the membrane. This is Membrane transporter D2 from Leishmania donovani.